The chain runs to 442 residues: Histidinol dehydrogenase (442 aa).

NAD(+) contacts are provided by Tyr-132, Gln-194, and Asn-217. Residues Ser-243, Gln-265, and His-268 each contribute to the substrate site. Zn(2+) is bound by residues Gln-265 and His-268. Residues Glu-332 and His-333 each act as proton acceptor in the active site. Substrate-binding residues include His-333, Asp-366, Glu-420, and His-425. Asp-366 contributes to the Zn(2+) binding site. His-425 provides a ligand contact to Zn(2+).

This sequence belongs to the histidinol dehydrogenase family. Requires Zn(2+) as cofactor.

The enzyme catalyses L-histidinol + 2 NAD(+) + H2O = L-histidine + 2 NADH + 3 H(+). It functions in the pathway amino-acid biosynthesis; L-histidine biosynthesis; L-histidine from 5-phospho-alpha-D-ribose 1-diphosphate: step 9/9. Catalyzes the sequential NAD-dependent oxidations of L-histidinol to L-histidinaldehyde and then to L-histidine. This chain is Histidinol dehydrogenase, found in Idiomarina loihiensis (strain ATCC BAA-735 / DSM 15497 / L2-TR).